The primary structure comprises 209 residues: Kynurenine formamidase (209 aa).

Tryptophan 19 is a substrate binding site. Histidine 49, histidine 53, and aspartate 55 together coordinate Zn(2+). The active-site Proton donor/acceptor is the histidine 59. Residues histidine 160 and glutamate 172 each coordinate Zn(2+).

It belongs to the Cyclase 1 superfamily. KynB family. As to quaternary structure, homodimer. The cofactor is Zn(2+).

The catalysed reaction is N-formyl-L-kynurenine + H2O = L-kynurenine + formate + H(+). It participates in amino-acid degradation; L-tryptophan degradation via kynurenine pathway; L-kynurenine from L-tryptophan: step 2/2. Catalyzes the hydrolysis of N-formyl-L-kynurenine to L-kynurenine, the second step in the kynurenine pathway of tryptophan degradation. The sequence is that of Kynurenine formamidase from Ralstonia nicotianae (strain ATCC BAA-1114 / GMI1000) (Ralstonia solanacearum).